A 2028-amino-acid chain; its full sequence is MDVTVSELLELFLQSPLVTWVKTFGPFGSGSQDNLTMYMDLVDGIFLNQIMLQIDPRPTNQRINKHVNNDVNLRIQNLTILVRNIKTYYQEVLQQLIVMNLPNVLMIGRDPLSGKSMEEIKKVLLLVLGCAVQCERKEEFIERIKQLDIETQAGIVAHIQEVTHNQENVFDLQWLELPDVAPEELEALSRSMVLHLRRLIDQRDECTELIVDLTQERDYLQAQHPPSPIKSSSADSTPSPTSSLSSEDKQHLAVELADTKARLRRVRQELEDKTEQLVDTRHEVDQLVLELQKVKQENIQLAADARSARAYRDELDSLREKANRVERLELELTRCKEKLHDVDFYKARMEELREDNIILIETKAMLEEQLTAARARGDKVHELEKENLQLKSKLHDLELDRDTDKKRIEELLEENMVLEIAQKQSMNESAHLGWELEQLSKNADLSDASRKSFVFELNECASSRILKLEKENQSLQSTIQGLRDASLVLEESGLKCGELEKENHQLSKKIEKLQTQLEREKQSNQDLETLSEELIREKEQLQSDMETLKADKARQIKDLEQEKDHLNRAMWSLRERSQVSSEARMKDVEKENKALHQTVTEANGKLSQLEFEKRQLHRDLEQAKEKGERAEKLERELQRLQEENGRLARKVTSLETATEKVEALEHESQGLQLENRTLRKSLDTLQNVSLQLEGLERDNKQLDAENLELRRLVETMRFTSTKLAQMERENQQLEREKEELRKNVDLLKALGKKSERLELSYQSVSAENLRLQQSLESSSHKTQTLESELGELEAERQALRRDLEALRLANAQLEGAEKDRKALEQEVAQLEKDKKLLEKEAKRLWQQVELKDAVLDDSTAKLSAVEKESRALDKELARCRDAAGKLKELEKDNRDLTKQVTVHARTLTTLREDLVLEKLKSQQLSSELDKLSQELEKVGLNRELLLQEDDSGSDTKYKILEGRNESALKTTLAMKEEKIVLLEAQMEEKASLNRQLESELQMLKKECETLRQNQGEGQHLQNSFKHPAGKTAASHQGKEAWGPGHKEATMELLRVKDRAIELERNNAALQAEKQLLKEQLQHLETQNVTFSSQILTLQKQSAFLQEHNTTLQTQTAKLQVENSTLSSQSAALTAQYTLLQNHHTAKETENESLQRQQEQLTAAYEALLQDHEHLGTLHERQSAEYEALIRQHSCLKTLHRNLELEHKELGERHGDMLKRKAELEEREKVLTTEREALQQEQRTNALAMGENQRLRGELDRVNFLHHQLKGEYEELHAHTKELKTSLNNAQLELNRWQARFDELKEQHQTMDISLTKLDNHCELLSRLKGNLEEENHHLLSQIQLLSQQNQMLLEQNMENKEQYHEEQKQYIDKLNALRRHKEKLEEKIMDQYKFYDPPPKKKNHWIGAKALVKLIKPKKEGSRERLKSTVDSPPWQLESSDPASPAASQPLRSQAENPDTPALGSNCAEERDAHNGSVGKGPGDLKPKRGSPHRGSLDRTDASTDLAMRSWPSELGSRTCSTSATTTAPSNSTPIARHPGRTKGYNSDDNLCEPSLEFEVPNHRQYVSRPSSLESSRNTSSNSSPLNLKGSSEQLHGRSESFSSEDLIPSRDLATLPREASTPGRNALGRHEYPLPRNGPLPQEGAQKRGTAPPYVGVRPCSASPSSEMVTLEEFLEESNRSSPTHDTPSCRDDLLSDYFRKASDPPAIGGQPGPPAKKEGAKMPTNFVAPTVKMAAPTSEGRPLKPGQYVKPNFRLTEAEAPPSVAPRQAQPPQSLSLGRPRQAPVPPASHAPASRSASLSRAFSLASADLLRASGPEACKQESPQKLGAPEALGGRETGSHTLQSPAPPSSHSLARERTPLVGKAGSSCQGPGPRSRPLDTRRFSLAPPKEERLAPLHQSATAPAIATAGAGAAAAGSGSNSQLLHFSPAAAPAARTKPKAPPRSGEVATITPVRAGLSLSEGDGVPGQGCSEGLPAKSPGRSPDLAPHLGRALEDCSRGSVSKSSPASPEPGGDPQTVWYEYGCV.

A Calponin-homology (CH) domain is found at 11 to 131; it reads LFLQSPLVTW…KVLLLVLGCA (121 aa). A disordered region spans residues 222–250; it reads AQHPPSPIKSSSADSTPSPTSSLSSEDKQ. Phosphoserine occurs at positions 227 and 239. Low complexity predominate over residues 229–245; that stretch reads IKSSSADSTPSPTSSLS. Coiled-coil stretches lie at residues 247–428, 456–1017, 1045–1094, and 1139–1393; these read EDKQ…SMNE, ELNE…QGEG, HKEA…SSQI, and LQNH…DQYK. Phosphoserine is present on serine 486. The segment covering 1011-1024 has biased composition (polar residues); it reads RQNQGEGQHLQNSF. Residues 1011-1043 form a disordered region; it reads RQNQGEGQHLQNSFKHPAGKTAASHQGKEAWGP. Over residues 1419–1428 the composition is skewed to basic and acidic residues; it reads KEGSRERLKS. 2 disordered regions span residues 1419–1724 and 1736–1803; these read KEGS…GAKM and AAPT…SLSR. Low complexity-rich tracts occupy residues 1439 to 1450, 1517 to 1534, and 1568 to 1588; these read SSDPASPAASQP, SRTC…NSTP, and SRPS…PLNL. The residue at position 1444 (serine 1444) is a Phosphoserine. Positions 1589–1604 are enriched in polar residues; it reads KGSSEQLHGRSESFSS. Serine 1601 carries the phosphoserine modification. Residues 1661–1691 carry the GBA motif; that stretch reads CSASPSSEMVTLEEFLEESNRSSPTHDTPSC. A compositionally biased stretch (basic and acidic residues) spans 1689–1704; the sequence is PSCRDDLLSDYFRKAS. Over residues 1792 to 1803 the composition is skewed to low complexity; sequence HAPASRSASLSR. Serine 1806 carries the phosphoserine modification. Positions 1816 to 2021 are disordered; that stretch reads SGPEACKQES…PEPGGDPQTV (206 aa). Residues 1842–1855 show a composition bias toward polar residues; it reads SHTLQSPAPPSSHS. Basic and acidic residues predominate over residues 1879-1897; it reads RPLDTRRFSLAPPKEERLA. Positions 1902–1924 are enriched in low complexity; it reads SATAPAIATAGAGAAAAGSGSNS. Position 1954 is a phosphothreonine (threonine 1954). Positions 2025-2028 match the PDZ-binding motif; that stretch reads YGCV. Residues 2026-2028 form a DVL1-binding region; that stretch reads GCV.

Belongs to the CCDC88 family. Homooligomer. Interacts with DVL1 (via PDZ domain); dissociates following initiation of non-canonical Wnt signaling. Interacts (via C-terminus) with ligand-activated Wnt receptor FZD7; competes with DVL1 for binding to FZD7 and displaces DVL1 from ligand-activated FZD7. Interacts (via GBA motif) with guanine nucleotide-binding protein G(i) alpha subunits GNAI1, GNAI2 and GNAI3 (inactive GDP-bound form); interacts with higher affinity with GNAI1 and GNAI3 than with GNAI2 and interaction leads to G(i) alpha subunit activation. Does not interact with GNAO1.

It is found in the cytoplasm. The protein localises to the cell junction. Required for activation of guanine nucleotide-binding proteins (G-proteins) during non-canonical Wnt signaling. Binds to ligand-activated Wnt receptor FZD7, displacing DVL1 from the FZD7 receptor and leading to inhibition of canonical Wnt signaling. Acts as a non-receptor guanine nucleotide exchange factor by also binding to guanine nucleotide-binding protein G(i) alpha (Gi-alpha) subunits, leading to their activation. Binding to Gi-alpha subunits displaces the beta and gamma subunits from the heterotrimeric G-protein complex, triggering non-canonical Wnt responses such as activation of RAC1 and PI3K-AKT signaling. Promotes apical constriction of cells via ARHGEF18. The chain is Protein Daple (CCDC88C) from Homo sapiens (Human).